A 973-amino-acid chain; its full sequence is E3 ubiquitin-protein ligase MIB2 (973 aa).

Residues 1 to 80 (MDLDPHAGVQ…AHDLLLYDNA (80 aa)) form the MIB/HERC2 1 domain. A ZZ-type zinc finger spans residues 86–138 (HPNIICDCCKKHGLRGMRWKCRVCFDYDLCTQCYMHNKHDLTHAFERYETSHS). 8 residues coordinate Zn(2+): Cys-91, Cys-94, Cys-106, Cys-109, Cys-115, Cys-118, His-124, and His-128. The MIB/HERC2 2 domain occupies 149–227 (LPRIPLRGIF…KVDLRCVGEA (79 aa)). Ser-251 is subject to Phosphoserine. ANK repeat units follow at residues 480–509 (QGRT…SMDL), 513–542 (EGNT…AVDA), 546–575 (TRST…DVNL), 579–611 (HADT…DVTA), 615–644 (QGFT…QLVD), 649–679 (DGFT…DVNV), 683–712 (KLQS…SVNT), 716–744 (EGDT…DPGP), and 785–814 (RGRS…ERQA). RING-type zinc fingers lie at residues 850–885 (CLVC…IRCQ) and 929–962 (CPIC…PICR).

Interacts with actin monomer. Post-translationally, ubiquitinated. Possibly via autoubiquitination. As to expression, highly expressed in brain, heart, liver and kidney.

It is found in the cytoplasm. The protein localises to the endosome. It catalyses the reaction S-ubiquitinyl-[E2 ubiquitin-conjugating enzyme]-L-cysteine + [acceptor protein]-L-lysine = [E2 ubiquitin-conjugating enzyme]-L-cysteine + N(6)-ubiquitinyl-[acceptor protein]-L-lysine.. It participates in protein modification; protein ubiquitination. In terms of biological role, E3 ubiquitin-protein ligase that mediates ubiquitination of Delta receptors, which act as ligands of Notch proteins. Positively regulates the Delta-mediated Notch signaling by ubiquitinating the intracellular domain of Delta, leading to endocytosis of Delta receptors. The chain is E3 ubiquitin-protein ligase MIB2 (Mib2) from Mus musculus (Mouse).